The chain runs to 105 residues: Guanidinium exporter (105 aa).

Methionine 1 is a topological domain (cytoplasmic). A helical membrane pass occupies residues 2 to 19 (SWIVLLIAGLLEVVWAIG). Residues 20 to 28 (LKYTHGFTR) lie on the Periplasmic side of the membrane. The helical transmembrane segment at 29 to 48 (LTPSIITIAAMIVSIAMLSW) threads the bilayer. Residues 49–54 (AMRTLP) lie on the Cytoplasmic side of the membrane. The chain crosses the membrane as a helical span at residues 55-77 (VGTAYAVWTGIGAVGAAITGILL). Over 78-86 (LGESASPAR) the chain is Periplasmic. The helical transmembrane segment at 87-104 (LLSLGLIVAGIIGLKLST) threads the bilayer. Histidine 105 is a topological domain (cytoplasmic).

Belongs to the drug/metabolite transporter (DMT) superfamily. Small multidrug resistance (SMR) (TC 2.A.7.1) family. Gdx/SugE subfamily.

It localises to the cell inner membrane. In terms of biological role, guanidinium ion exporter. Couples guanidinium export to the proton motive force, exchanging one guanidinium ion for two protons. In Citrobacter freundii, this protein is Guanidinium exporter.